Reading from the N-terminus, the 233-residue chain is Probable chemoreceptor glutamine deamidase CheD (233 aa).

The protein belongs to the CheD family.

It carries out the reaction L-glutaminyl-[protein] + H2O = L-glutamyl-[protein] + NH4(+). Probably deamidates glutamine residues to glutamate on methyl-accepting chemotaxis receptors (MCPs), playing an important role in chemotaxis. This chain is Probable chemoreceptor glutamine deamidase CheD, found in Vibrio cholerae serotype O1 (strain ATCC 39315 / El Tor Inaba N16961).